The primary structure comprises 576 residues: Proline--tRNA ligase (576 aa).

This sequence belongs to the class-II aminoacyl-tRNA synthetase family. ProS type 1 subfamily. Homodimer.

It localises to the cytoplasm. The enzyme catalyses tRNA(Pro) + L-proline + ATP = L-prolyl-tRNA(Pro) + AMP + diphosphate. Functionally, catalyzes the attachment of proline to tRNA(Pro) in a two-step reaction: proline is first activated by ATP to form Pro-AMP and then transferred to the acceptor end of tRNA(Pro). As ProRS can inadvertently accommodate and process non-cognate amino acids such as alanine and cysteine, to avoid such errors it has two additional distinct editing activities against alanine. One activity is designated as 'pretransfer' editing and involves the tRNA(Pro)-independent hydrolysis of activated Ala-AMP. The other activity is designated 'posttransfer' editing and involves deacylation of mischarged Ala-tRNA(Pro). The misacylated Cys-tRNA(Pro) is not edited by ProRS. The sequence is that of Proline--tRNA ligase from Magnetococcus marinus (strain ATCC BAA-1437 / JCM 17883 / MC-1).